The sequence spans 380 residues: Negative elongation factor E (380 aa).

Residues 7-36 adopt a coiled-coil conformation; that stretch reads GLSEEEEALQKKFNKLKKKKKALLALKKQS. Low complexity predominate over residues 30–43; that stretch reads LALKKQSSSSTTSQ. The interval 30–67 is disordered; it reads LALKKQSSSSTTSQGGVKRSLSEQPVMDTATATEQAKQ. Serine 51 is subject to Phosphoserine. Residue lysine 78 forms a Glycyl lysine isopeptide (Lys-Gly) (interchain with G-Cter in SUMO1); alternate linkage. Lysine 78 participates in a covalent cross-link: Glycyl lysine isopeptide (Lys-Gly) (interchain with G-Cter in SUMO2); alternate. Residues 79–258 are disordered; sequence AETKNSGFKR…SDSFPERRAP (180 aa). A Glycyl lysine isopeptide (Lys-Gly) (interchain with G-Cter in SUMO2) cross-link involves residue lysine 82. The segment covering 90 to 101 has biased composition (basic and acidic residues); that stretch reads RTLEGKLKDPEK. Phosphoserine occurs at positions 113 and 115. A PolyADP-ribosyl glutamic acid modification is found at glutamate 122. Phosphoserine is present on residues serine 131 and serine 139. Position 151 is a polyADP-ribosyl glutamic acid (glutamate 151). Position 165 is a phosphoserine (serine 165). A PolyADP-ribosyl glutamic acid modification is found at glutamate 172. The residue at position 179 (serine 179) is a Phosphoserine. Phosphoserine; by CDK9 occurs at positions 181, 185, and 187. Tandem repeats lie at residues 184-185, 186-187, 188-189, and 190-191. The interval 184-243 is 30 X 2 AA approximate tandem repeats of R-[DSNE]; the sequence is RSRSRDRSHERNRDRDRDRERDRDRDRDRDRERDRDRDRDRDRDRERDRDRERDRDRDRE. Basic and acidic residues predominate over residues 186 to 256; the sequence is RSRDRSHERN…RRSDSFPERR (71 aa). The residue at position 191 (serine 191) is a Phosphoserine; by CDK9. A 5; approximate repeat occupies 192–193; it reads HE. 25 tandem repeats follow at residues 194-195, 196-197, 198-199, 200-201, 202-203, 204-205, 206-207, 208-209, 210-211, 212-213, 214-215, 216-217, 218-219, 220-221, 222-223, 224-225, 226-227, 228-229, 230-231, 232-233, 234-235, 236-237, 238-239, 240-241, and 242-243. Phosphoserine occurs at positions 249 and 251. Residues 262–332 form the RRM domain; the sequence is NTLYVYGEDM…VQLKVNIARK (71 aa). Phosphothreonine is present on residues threonine 272 and threonine 274. Residues serine 281 and serine 353 each carry the phosphoserine modification. Residue glutamate 374 is modified to PolyADP-ribosyl glutamic acid.

The protein belongs to the RRM NELF-E family. The NELF complex is composed of NELFA, NELFB, NELFCD (isoform NELF-C or isoform NELF-D) and NELFE. Interacts with NELFB. As to quaternary structure, (Microbial infection) Binds to the HIV-1 TAR RNA which is located in the long terminal repeat (LTR) of HIV-1. In terms of processing, phosphorylated by the P-TEFb complex at sites next to its RNA recognition motif, promoting its release from chromatin. Sumoylated. Post-translationally, poly-ADP-ribosylated by PARP1, thereby preventing RNA-binding and relieving transcription pausing. In terms of tissue distribution, widely expressed. Expressed in heart, brain, lung, placenta, liver, skeletal muscle, kidney and pancreas.

The protein localises to the nucleus. Its subcellular location is the chromosome. Essential component of the NELF complex, a complex that negatively regulates the elongation of transcription by RNA polymerase II. The NELF complex, which acts via an association with the DSIF complex and causes transcriptional pausing, is counteracted by the P-TEFb kinase complex. Provides the strongest RNA binding activity of the NELF complex and may initially recruit the NELF complex to RNA. In terms of biological role, (Microbial infection) The NELF complex is involved in HIV-1 latency possibly involving recruitment of PCF11 to paused RNA polymerase II. The polypeptide is Negative elongation factor E (NELFE) (Homo sapiens (Human)).